A 345-amino-acid polypeptide reads, in one-letter code: MLSSVPHRKTWNKSKKTVKVTRSYPTFPSLNAWEEFRGLFPVDGEPNPGVGLGVEEGLLGQMVHSPEFNLFPESVVFESNFVQVRKGRDWIDIYKTYNTMALGVTSSVPCLPLPNILLMASVKWHHGQNQTWNKPSTAPKIILKRILPLKFVELQVSDHLQRVLRLRTVTEKIYYLKLHPDHPKTVFHFWIRLIQILQKGLSITTKDPRILVTHCLVPKNSCSPSGDSQLVQKKPQASQPSESLMQLMAKGESEALCQIFVDLHQHNLFSSRSSKKTENKKDSSGKKTSPSEDSIPCTRDLSWRDSFTYGEWERENPSGPQSLSLLSTLAASTGPQLAPLIGSSI.

2 disordered regions span residues 222-241 and 271-299; these read CSPSGDSQLVQKKPQASQPS and SRSSKKTENKKDSSGKKTSPSEDSIPCTR. Residues 275 to 285 are compositionally biased toward basic and acidic residues; the sequence is KKTENKKDSSG.

This sequence belongs to the GARIN family.

It is found in the golgi apparatus. Its function is as follows. RAB2B effector protein required for accurate acrosome formation and normal male fertility. In complex with RAB2A/RAB2B, seems to suppress excessive vesicle trafficking during acrosome formation. This chain is Golgi-associated RAB2 interactor protein 1B (GARIN1B), found in Bos taurus (Bovine).